We begin with the raw amino-acid sequence, 62 residues long: Photosystem II reaction center protein Z (62 aa).

The next 2 membrane-spanning stretches (helical) occupy residues 8–28 (TVLA…VIFA) and 41–61 (FSGA…NSFV).

Belongs to the PsbZ family. As to quaternary structure, PSII is composed of 1 copy each of membrane proteins PsbA, PsbB, PsbC, PsbD, PsbE, PsbF, PsbH, PsbI, PsbJ, PsbK, PsbL, PsbM, PsbT, PsbY, PsbZ, Psb30/Ycf12, at least 3 peripheral proteins of the oxygen-evolving complex and a large number of cofactors. It forms dimeric complexes.

The protein localises to the plastid. The protein resides in the chloroplast thylakoid membrane. May control the interaction of photosystem II (PSII) cores with the light-harvesting antenna, regulates electron flow through the 2 photosystem reaction centers. PSII is a light-driven water plastoquinone oxidoreductase, using light energy to abstract electrons from H(2)O, generating a proton gradient subsequently used for ATP formation. This is Photosystem II reaction center protein Z from Mesostigma viride (Green alga).